Consider the following 210-residue polypeptide: MIATTRDREGATMITFRLRLPCRTILRVFSRNSLVRGTDRLEAVVMLLAVTVSLLTIPFAAAAGTAVHDSRSHVYAHQAQTRHPATATVIDHEGVIDSNTTATSAPPRTKITVPARWVVNGIERSGEVNAKPGTKSGDRVGIWVDSAGQLVDEPAPPARAIADAALAALGLWLSVAAVAGALLALTRAILIRVRNASWQHDIDSLFCTQR.

A run of 2 helical transmembrane segments spans residues 43 to 63 and 165 to 185; these read AVVM…AAAA and ALAA…LLAL.

The protein resides in the cell membrane. This is Probable membrane protein MT1774 from Mycobacterium tuberculosis (strain CDC 1551 / Oshkosh).